A 243-amino-acid chain; its full sequence is DNA repair protein RecO (243 aa).

This sequence belongs to the RecO family.

In terms of biological role, involved in DNA repair and RecF pathway recombination. This Vibrio vulnificus (strain CMCP6) protein is DNA repair protein RecO.